The primary structure comprises 309 residues: Cyclin-dependent kinase B1-1 (309 aa).

One can recognise a Protein kinase domain in the interval 4–301 (YEKLEKVGEG…AKTALDHPYF (298 aa)). ATP contacts are provided by residues 10 to 18 (VGEGTYGKV) and Lys-33. A Phosphotyrosine modification is found at Tyr-15. Asp-142 functions as the Proton acceptor in the catalytic mechanism. Residue Thr-176 is modified to Phosphothreonine; by CAK.

The protein belongs to the protein kinase superfamily. CMGC Ser/Thr protein kinase family. CDC2/CDKX subfamily. As to quaternary structure, interacts with CKS1. Interacts with CYCU3-1. Interacts with SIM, SMR1 and SMR2. As to expression, highly expressed in guard cells and stomatal precursor cells of cotyledons. Expressed in roots, stems, flowers and siliques.

It localises to the nucleus. The enzyme catalyses L-seryl-[protein] + ATP = O-phospho-L-seryl-[protein] + ADP + H(+). The catalysed reaction is L-threonyl-[protein] + ATP = O-phospho-L-threonyl-[protein] + ADP + H(+). It carries out the reaction [DNA-directed RNA polymerase] + ATP = phospho-[DNA-directed RNA polymerase] + ADP + H(+). With respect to regulation, phosphorylation at Thr-14 or Tyr-15 inactivates the enzyme, while phosphorylation at Thr-176 activates it. In terms of biological role, may control G2/M (mitosis) phase progression. Plays a role in regulating seedling growth in darkness via regulation of hypocotyl cell elongation and cotyledon cell development. Plays a role in stomatal development. Required to suppress endoreduplication. Together with CDKB1-2, promotes both the last division in the stomatal cell lineage as well as the number of stomata. In collaboration with MYB124 and MYB88, restrict the G1/S transition and chloroplast and nuclear number during stomatal formation, and normally maintain fate and developmental progression throughout the stomatal cell lineage. The sequence is that of Cyclin-dependent kinase B1-1 (CDKB1-1) from Arabidopsis thaliana (Mouse-ear cress).